Reading from the N-terminus, the 561-residue chain is Arginine--tRNA ligase (561 aa).

The 'HIGH' region motif lies at 129 to 139; it reads ANPTGPLHVGH.

The protein belongs to the class-I aminoacyl-tRNA synthetase family. In terms of assembly, monomer.

Its subcellular location is the cytoplasm. It carries out the reaction tRNA(Arg) + L-arginine + ATP = L-arginyl-tRNA(Arg) + AMP + diphosphate. The polypeptide is Arginine--tRNA ligase (Bordetella bronchiseptica (strain ATCC BAA-588 / NCTC 13252 / RB50) (Alcaligenes bronchisepticus)).